The following is a 291-amino-acid chain: Pyridoxal 5'-phosphate synthase subunit PdxS (291 aa).

Residue aspartate 23 participates in D-ribose 5-phosphate binding. Catalysis depends on lysine 80, which acts as the Schiff-base intermediate with D-ribose 5-phosphate. Glycine 152 provides a ligand contact to D-ribose 5-phosphate. Arginine 164 is a binding site for D-glyceraldehyde 3-phosphate. D-ribose 5-phosphate-binding positions include glycine 213 and 234-235 (GS).

This sequence belongs to the PdxS/SNZ family. In terms of assembly, in the presence of PdxT, forms a dodecamer of heterodimers.

The enzyme catalyses aldehydo-D-ribose 5-phosphate + D-glyceraldehyde 3-phosphate + L-glutamine = pyridoxal 5'-phosphate + L-glutamate + phosphate + 3 H2O + H(+). It functions in the pathway cofactor biosynthesis; pyridoxal 5'-phosphate biosynthesis. Functionally, catalyzes the formation of pyridoxal 5'-phosphate from ribose 5-phosphate (RBP), glyceraldehyde 3-phosphate (G3P) and ammonia. The ammonia is provided by the PdxT subunit. Can also use ribulose 5-phosphate and dihydroxyacetone phosphate as substrates, resulting from enzyme-catalyzed isomerization of RBP and G3P, respectively. This Haemophilus influenzae (strain ATCC 51907 / DSM 11121 / KW20 / Rd) protein is Pyridoxal 5'-phosphate synthase subunit PdxS.